Consider the following 235-residue polypeptide: Segregation and condensation protein A (235 aa).

The protein belongs to the ScpA family. Component of a cohesin-like complex composed of ScpA, ScpB and the Smc homodimer, in which ScpA and ScpB bind to the head domain of Smc. The presence of the three proteins is required for the association of the complex with DNA.

The protein localises to the cytoplasm. Functionally, participates in chromosomal partition during cell division. May act via the formation of a condensin-like complex containing Smc and ScpB that pull DNA away from mid-cell into both cell halves. The chain is Segregation and condensation protein A from Streptococcus agalactiae serotype Ia (strain ATCC 27591 / A909 / CDC SS700).